Consider the following 598-residue polypeptide: MAQVAGKKLTVAPEAGKPPGIPGSSSSVKEIPEILVDPRTRRRYLRGRFLGKGGFAKCYEITDLESREVFAGKIVPKTMLLKPHQKDKMTMEIAIQRSLDHRHVVGFHGFFEDNDFVYVVLELCRRRSLLELHKRRKAVTEPEARYYLKQTILGCQYLHSNRVIHRDLKLGNLFLNDEMEVKIGDFGLATKVEYDGERKKTLCGTPNYIAPEVLGKKGHSFEVDIWSIGCIMYTLLVGKPPFETSCLKETYMRIKKNEYSVPKHINPMATALIQKMLRSEPTSRPTIDDLLNDEFFTTGYIPSRLPTTCLTVPPRFSIAPSTIDQSLRKPLTAINKGQDSPLVEKQSVPAKEEEMQQPESTEPADCYLSEMLQQLTCVNAVKPSERAVIRQEEAEDPASVPIFWVSKWVDYSDKYGLGYQLCDNSVGVLFNDSTRLIMYNDGDSLQYIERNNSESYLNVRSYPAALTKKITLLKYFRNYMSEHLLKAGANITPREGDELARLPFLRTWFRTRSAIILHLSNGTVQINFFQDHTKIILCPLMAAVSYIDEKREFHTYKLSLIQEFGCCKELASRLRYARTMVEKLQSSKSGVAHVKASA.

The disordered stretch occupies residues 1–26 (MAQVAGKKLTVAPEAGKPPGIPGSSS). Phosphoserine occurs at positions 25 and 26. The 253-residue stretch at 44–296 (YLRGRFLGKG…IDDLLNDEFF (253 aa)) folds into the Protein kinase domain. ATP is bound by residues 50–58 (LGKGGFAKC), K73, and E122. Catalysis depends on D167, which acts as the Proton acceptor. ATP contacts are provided by residues 169–172 (KLGN) and D185. The segment at 185–212 (DFGLATKVEYDGERKKTLCGTPNYIAPE) is activation loop. T201 is modified (phosphothreonine). 2 positions are modified to phosphoserine; by autocatalysis: S260 and S326. Positions 328-331 (RKPL) match the D-box that targets the protein for proteasomal degradation in anaphase motif. Residues 336 to 360 (KGQDSPLVEKQSVPAKEEEMQQPES) form a disordered region. A Phosphoserine modification is found at S340. Residues 404–482 (WVSKWVDYSD…LKYFRNYMSE (79 aa)) form the POLO box 1 domain. The segment at 487-501 (AGANITPREGDELAR) is linker. The 83-residue stretch at 504-586 (FLRTWFRTRS…ARTMVEKLQS (83 aa)) folds into the POLO box 2 domain. Residues 532–534 (HTK) are important for interaction with phosphorylated proteins.

This sequence belongs to the protein kinase superfamily. Ser/Thr protein kinase family. Interacts with plk1 and kif2a. Interacts with fbxo5. In terms of processing, activated by phosphorylation on Thr-201 during M phase. Post-translationally, protein levels are down-regulated by proteasomal degradation in anaphase.

The protein resides in the nucleus. It is found in the cytoplasm. The protein localises to the cytoskeleton. Its subcellular location is the microtubule organizing center. It localises to the centrosome. The protein resides in the spindle. It is found in the midbody. It catalyses the reaction L-seryl-[protein] + ATP = O-phospho-L-seryl-[protein] + ADP + H(+). It carries out the reaction L-threonyl-[protein] + ATP = O-phospho-L-threonyl-[protein] + ADP + H(+). In terms of biological role, plays multiple essential roles during mitosis. Phosphorylates the N-terminal domain of cdc25, which leads to cyclin b-cdc2 activation and mitotic entry. Also required for organization of bipolar spindles, and for exit from mitosis. Phosphorylates tpx2. The chain is Serine/threonine-protein kinase PLK1 (plk1) from Xenopus tropicalis (Western clawed frog).